The chain runs to 82 residues: RNA-binding protein Hfq (82 aa).

Residues 9–68 (DPFLNTLRKEHVPVSIYLVNGIKLQGKVDSFDQYVIMLKNTVSQMVYKHAISTIVPGRPV) form the Sm domain.

It belongs to the Hfq family. Homohexamer.

Its function is as follows. RNA chaperone that binds small regulatory RNA (sRNAs) and mRNAs to facilitate mRNA translational regulation in response to envelope stress, environmental stress and changes in metabolite concentrations. Also binds with high specificity to tRNAs. The chain is RNA-binding protein Hfq from Methylococcus capsulatus (strain ATCC 33009 / NCIMB 11132 / Bath).